The following is a 159-amino-acid chain: Small ribosomal subunit protein uS19 (159 aa).

This sequence belongs to the universal ribosomal protein uS19 family.

In terms of biological role, protein S19 forms a complex with S13 that binds strongly to the 16S ribosomal RNA. The protein is Small ribosomal subunit protein uS19 of Pyrobaculum arsenaticum (strain DSM 13514 / JCM 11321 / PZ6).